Here is a 382-residue protein sequence, read N- to C-terminus: Cytochrome c biogenesis CcmF N-terminal-like mitochondrial protein 1 (382 aa).

The next 4 helical transmembrane spans lie at 1–21 (MSIS…FVAF), 30–50 (AFGA…LLFC), 79–99 (HEGS…FFCY), and 117–137 (SLFF…LLRY).

Belongs to the CcmF/CycK/Ccl1/NrfE/CcsA family. Interacts with CCMFN2 and CCMH.

Its subcellular location is the mitochondrion inner membrane. Forms a complex with CCMFC, CCMFN2 and CCMH that performs the assembly of heme with c-type apocytochromes in mitochondria. The protein is Cytochrome c biogenesis CcmF N-terminal-like mitochondrial protein 1 of Arabidopsis thaliana (Mouse-ear cress).